Here is a 324-residue protein sequence, read N- to C-terminus: Histidine N-acetyltransferase (324 aa).

Residues phenylalanine 15–proline 151 form the N-acetyltransferase domain.

It catalyses the reaction L-histidine + acetyl-CoA = N(alpha)-acetyl-L-histidine + CoA + H(+). Functionally, enzyme responsible for the N-acetyl-histidine (NAH) synthesis, which is a major constituent of brain and lens of ectothermic vertebrates. The protein is Histidine N-acetyltransferase (hisat) of Xenopus tropicalis (Western clawed frog).